Reading from the N-terminus, the 478-residue chain is Protein nucleotidyltransferase YdiU (478 aa).

8 residues coordinate ATP: Gly-84, Gly-86, Arg-87, Lys-107, Asp-119, Gly-120, Arg-170, and Arg-177. Residue Asp-246 is the Proton acceptor of the active site. 2 residues coordinate Mg(2+): Asn-247 and Asp-256. Asp-256 is a binding site for ATP.

Belongs to the SELO family. The cofactor is Mg(2+). Requires Mn(2+) as cofactor.

The enzyme catalyses L-seryl-[protein] + ATP = 3-O-(5'-adenylyl)-L-seryl-[protein] + diphosphate. It catalyses the reaction L-threonyl-[protein] + ATP = 3-O-(5'-adenylyl)-L-threonyl-[protein] + diphosphate. The catalysed reaction is L-tyrosyl-[protein] + ATP = O-(5'-adenylyl)-L-tyrosyl-[protein] + diphosphate. It carries out the reaction L-histidyl-[protein] + UTP = N(tele)-(5'-uridylyl)-L-histidyl-[protein] + diphosphate. The enzyme catalyses L-seryl-[protein] + UTP = O-(5'-uridylyl)-L-seryl-[protein] + diphosphate. It catalyses the reaction L-tyrosyl-[protein] + UTP = O-(5'-uridylyl)-L-tyrosyl-[protein] + diphosphate. In terms of biological role, nucleotidyltransferase involved in the post-translational modification of proteins. It can catalyze the addition of adenosine monophosphate (AMP) or uridine monophosphate (UMP) to a protein, resulting in modifications known as AMPylation and UMPylation. The protein is Protein nucleotidyltransferase YdiU of Escherichia coli (strain ATCC 8739 / DSM 1576 / NBRC 3972 / NCIMB 8545 / WDCM 00012 / Crooks).